A 953-amino-acid polypeptide reads, in one-letter code: Scaffold attachment factor B2 (953 aa).

Residues 1 to 29 are disordered; it reads MAETLPGSGDSGPGTASLGPGVAETGTRR. Ala2 carries the post-translational modification N-acetylalanine. The SAP domain occupies 30–64; that stretch reads LSELRVIDLRAELKKRNLDTGGNKSVLMERLKKAV. Position 54 is a phosphoserine (Ser54). A Glycyl lysine isopeptide (Lys-Gly) (interchain with G-Cter in SUMO1); alternate cross-link involves residue Lys65. A Glycyl lysine isopeptide (Lys-Gly) (interchain with G-Cter in SUMO2); alternate cross-link involves residue Lys65. The disordered stretch occupies residues 91–114; sequence KGLKMEEEGTEDNGLEDDSRDGQE. Lys94 participates in a covalent cross-link: Glycyl lysine isopeptide (Lys-Gly) (interchain with G-Cter in SUMO2). The span at 98–114 shows a compositional bias: acidic residues; the sequence is EGTEDNGLEDDSRDGQE. Residues Ser109 and Ser158 each carry the phosphoserine modification. Glycyl lysine isopeptide (Lys-Gly) (interchain with G-Cter in SUMO2) cross-links involve residues Lys188 and Lys199. Position 201 is a phosphothreonine (Thr201). Ser207 is subject to Phosphoserine. A disordered region spans residues 219–404; the sequence is ILGETCKSEP…KDEKGRVGSG (186 aa). The span at 224-233 shows a compositional bias: basic and acidic residues; sequence CKSEPVKEES. A Glycyl lysine isopeptide (Lys-Gly) (interchain with G-Cter in SUMO) cross-link involves residue Lys230. A compositionally biased stretch (polar residues) spans 274–285; sequence SESTAHAQSSKA. Over residues 292-308 the composition is skewed to basic and acidic residues; that stretch reads VKREPAEQPGDGERTDC. Lys293 participates in a covalent cross-link: Glycyl lysine isopeptide (Lys-Gly) (interchain with G-Cter in SUMO). The segment covering 318–329 has biased composition (low complexity); sequence EQSSAASELAEA. Over residues 345–358 the composition is skewed to basic and acidic residues; it reads EARDSKEDGRKFDF. A compositionally biased stretch (polar residues) spans 370–382; sequence ESSTSEGADQKMS. Glycyl lysine isopeptide (Lys-Gly) (interchain with G-Cter in SUMO2) cross-links involve residues Lys380, Lys385, Lys388, Lys391, and Lys395. Basic and acidic residues predominate over residues 383 to 400; the sequence is SFKEEKDIKPIIKDEKGR. One can recognise an RRM domain in the interval 407 to 485; the sequence is RNLWVSGLSS…RMISVEKAKN (79 aa). Phosphoserine occurs at positions 507 and 513. Residues Lys517, Lys524, Lys525, Lys541, Lys542, and Lys551 each participate in a glycyl lysine isopeptide (Lys-Gly) (interchain with G-Cter in SUMO2) cross-link. Over residues 525–551 the composition is skewed to basic and acidic residues; the sequence is KEEKIEKKEEKKPEDIKKEEKDQDELK. Disordered regions lie at residues 525-665 and 684-953; these read KEEK…RLQR and RERL…TRRY. Residues 555–564 show a composition bias toward polar residues; sequence TNRSRVTKSG. The segment covering 567 to 579 has biased composition (basic and acidic residues); that stretch reads GMERTVVMDKSKG. Glycyl lysine isopeptide (Lys-Gly) (interchain with G-Cter in SUMO2) cross-links involve residues Lys578, Lys586, and Lys608. 2 stretches are compositionally biased toward basic and acidic residues: residues 590–665 and 684–820; these read RSKE…RLQR and RERL…DSRD. An interaction with SAFB1 region spans residues 600–953; the sequence is DRKSESKEKR…PPYPHFTRRY (354 aa). Lys616 participates in a covalent cross-link: Glycyl lysine isopeptide (Lys-Gly) (interchain with G-Cter in SUMO2); alternate. At Lys616 the chain carries N6-acetyllysine; alternate. Positions 713–730 match the Nuclear localization signal motif; it reads RRQQEQLRYEQERRPGRR. Ser787 and Ser832 each carry phosphoserine. Basic and acidic residues predominate over residues 843–859; the sequence is GGRDWGEHNQRLEEHQA. A compositionally biased stretch (gly residues) spans 881–890; the sequence is GERGLSGPSG. Position 886 is a phosphoserine (Ser886). An omega-N-methylarginine mark is found at Arg897 and Arg903. Gly residues predominate over residues 899–927; it reads GVAGRGGFAQGGHSQGHVVPGGGLEGGGV.

In terms of assembly, interacts with SAFB/SAFB1 and SCAM1. Interacts with isoform 2 SRPK1 and inhibits its activity. In terms of tissue distribution, expressed at high levels in the CNS and at low levels in the liver. Expressed in a wide number of breast cancer cell lines.

The protein localises to the cytoplasm. The protein resides in the nucleus. Binds to scaffold/matrix attachment region (S/MAR) DNA. Can function as an estrogen receptor corepressor and can also inhibit cell proliferation. This is Scaffold attachment factor B2 (SAFB2) from Homo sapiens (Human).